The following is a 370-amino-acid chain: Homospermidine synthase (370 aa).

It belongs to the deoxyhypusine synthase family. Homotetramer. It depends on NAD(+) as a cofactor.

The catalysed reaction is putrescine + spermidine = sym-homospermidine + propane-1,3-diamine. It participates in alkaloid biosynthesis; pyrrolizidine alkaloid biosynthesis. Catalyzes the transfer of an aminobutyl unit from spermidine onto putrescine. The resulting polyamine homospermidine is a precursor in the biosynthesis of pyrrolizidine alkaloids. The chain is Homospermidine synthase (HSS1) from Senecio vulgaris (Common groundsel).